The primary structure comprises 209 residues: MKSILGKKIGMTQIFNEDGSVVPVTVIEAGPMVVTQIKTKEKEGYNAIQVGYIEKKEKHVNQPMRGHFGKAGVSFKKHLREFKINDDEQFNLGDEIKLDIFQDGDVVDVIGISKGKGTQGAIVRHNYSRGPMGHGSKSHRVAGARSAGSYPARVFKGRKGSGKMGHDRVTVQNLKIVKVDNERNLLLIKGAVPGNKGGVVTVREAIKSK.

The disordered stretch occupies residues 127–147; the sequence is YSRGPMGHGSKSHRVAGARSA.

This sequence belongs to the universal ribosomal protein uL3 family. As to quaternary structure, part of the 50S ribosomal subunit. Forms a cluster with proteins L14 and L19.

In terms of biological role, one of the primary rRNA binding proteins, it binds directly near the 3'-end of the 23S rRNA, where it nucleates assembly of the 50S subunit. This chain is Large ribosomal subunit protein uL3, found in Finegoldia magna (strain ATCC 29328 / DSM 20472 / WAL 2508) (Peptostreptococcus magnus).